We begin with the raw amino-acid sequence, 101 residues long: Small ribosomal subunit protein uS14 (101 aa).

Belongs to the universal ribosomal protein uS14 family. As to quaternary structure, part of the 30S ribosomal subunit. Contacts proteins S3 and S10.

Binds 16S rRNA, required for the assembly of 30S particles and may also be responsible for determining the conformation of the 16S rRNA at the A site. The chain is Small ribosomal subunit protein uS14 from Psychromonas ingrahamii (strain DSM 17664 / CCUG 51855 / 37).